Here is a 686-residue protein sequence, read N- to C-terminus: Translation initiation factor IF-2 (686 aa).

The tract at residues 61-98 (FEVEEKVVRSKKNSNKKKKKGKGNEDKRQENFAGRQQT) is disordered. Basic residues predominate over residues 69–81 (RSKKNSNKKKKKG). Residues 188-357 (ERPAVVTIMG…LLVSEVEEYK (170 aa)) enclose the tr-type G domain. The tract at residues 197 to 204 (GHVDHGKT) is G1. 197–204 (GHVDHGKT) lines the GTP pocket. The tract at residues 222–226 (GITQH) is G2. Residues 243–246 (DTPG) form a G3 region. GTP-binding positions include 243–247 (DTPGH) and 297–300 (NKMD). The interval 297–300 (NKMD) is G4. Residues 333 to 335 (SAI) form a G5 region.

Belongs to the TRAFAC class translation factor GTPase superfamily. Classic translation factor GTPase family. IF-2 subfamily.

It localises to the cytoplasm. Functionally, one of the essential components for the initiation of protein synthesis. Protects formylmethionyl-tRNA from spontaneous hydrolysis and promotes its binding to the 30S ribosomal subunits. Also involved in the hydrolysis of GTP during the formation of the 70S ribosomal complex. This is Translation initiation factor IF-2 from Bacillus cereus (strain B4264).